The following is a 363-amino-acid chain: Peptide chain release factor 1 (363 aa).

Glutamine 236 carries the post-translational modification N5-methylglutamine. The tract at residues 286–305 (KKEMERSTMRKSQIGSGDRS) is disordered.

Belongs to the prokaryotic/mitochondrial release factor family. Post-translationally, methylated by PrmC. Methylation increases the termination efficiency of RF1.

It is found in the cytoplasm. Peptide chain release factor 1 directs the termination of translation in response to the peptide chain termination codons UAG and UAA. The polypeptide is Peptide chain release factor 1 (Wolbachia pipientis subsp. Culex pipiens (strain wPip)).